Here is a 149-residue protein sequence, read N- to C-terminus: D-aminoacyl-tRNA deacylase (149 aa).

Residues 137-138 carry the Gly-cisPro motif, important for rejection of L-amino acids motif; the sequence is GP.

This sequence belongs to the DTD family. In terms of assembly, homodimer.

It localises to the cytoplasm. It carries out the reaction glycyl-tRNA(Ala) + H2O = tRNA(Ala) + glycine + H(+). It catalyses the reaction a D-aminoacyl-tRNA + H2O = a tRNA + a D-alpha-amino acid + H(+). Its function is as follows. An aminoacyl-tRNA editing enzyme that deacylates mischarged D-aminoacyl-tRNAs. Also deacylates mischarged glycyl-tRNA(Ala), protecting cells against glycine mischarging by AlaRS. Acts via tRNA-based rather than protein-based catalysis; rejects L-amino acids rather than detecting D-amino acids in the active site. By recycling D-aminoacyl-tRNA to D-amino acids and free tRNA molecules, this enzyme counteracts the toxicity associated with the formation of D-aminoacyl-tRNA entities in vivo and helps enforce protein L-homochirality. This is D-aminoacyl-tRNA deacylase from Syntrophus aciditrophicus (strain SB).